The following is a 495-amino-acid chain: Glutelin type-B 2 (495 aa).

Positions 1-24 are cleaved as a signal peptide; that stretch reads MATTIFSRFSIYFCAMLLCQGSMA. 2 disulfide bridges follow: cysteine 45–cysteine 78 and cysteine 121–cysteine 305. 2 consecutive Cupin type-1 domains span residues 50 to 245 and 311 to 460; these read LQAF…VAAK and VNIE…EQAR. The interval 464–495 is disordered; the sequence is NNRGEEHGAFTPRFQQQYYPGFSNESESETSE.

Belongs to the 11S seed storage protein (globulins) family. Hexamer; each subunit is composed of an acidic and a basic chain derived from a single precursor and linked by a disulfide bond.

Its function is as follows. Seed storage protein. The sequence is that of Glutelin type-B 2 (GLUB2) from Oryza sativa subsp. japonica (Rice).